The following is a 177-amino-acid chain: Protein GrpE (177 aa).

Positions 1-26 (MSEEIKKDDLQEEVEATETEETVEEV) are disordered. The span at 10–26 (LQEEVEATETEETVEEV) shows a compositional bias: acidic residues.

Belongs to the GrpE family. Homodimer.

The protein resides in the cytoplasm. Its function is as follows. Participates actively in the response to hyperosmotic and heat shock by preventing the aggregation of stress-denatured proteins, in association with DnaK and GrpE. It is the nucleotide exchange factor for DnaK and may function as a thermosensor. Unfolded proteins bind initially to DnaJ; upon interaction with the DnaJ-bound protein, DnaK hydrolyzes its bound ATP, resulting in the formation of a stable complex. GrpE releases ADP from DnaK; ATP binding to DnaK triggers the release of the substrate protein, thus completing the reaction cycle. Several rounds of ATP-dependent interactions between DnaJ, DnaK and GrpE are required for fully efficient folding. This is Protein GrpE from Streptococcus agalactiae serotype Ia (strain ATCC 27591 / A909 / CDC SS700).